We begin with the raw amino-acid sequence, 387 residues long: Krueppel-like factor 17 (387 aa).

3 disordered regions span residues 28–54 (FLDM…IRRV), 213–234 (SRDP…PLES), and 257–277 (RREA…SPVS). Positions 30 to 46 (DMSSSPGSGGVHTSWNR) are enriched in polar residues. Over residues 257–270 (RREAQNSRAQERAS) the composition is skewed to basic and acidic residues. C2H2-type zinc fingers lie at residues 280-304 (YHCE…QRKH), 310-334 (YKCT…TRIH), and 340-362 (HKCD…QRTH). Residues 357–387 (QHQRTHMRMPRSPDPQADSGRRAGPLPAPHL) are disordered.

The protein belongs to the Sp1 C2H2-type zinc-finger protein family.

The protein resides in the nucleus. In terms of biological role, transcription repressor that binds to the promoter of target genes and prevents their expression. Acts as a negative regulator of epithelial-mesenchymal transition and metastasis in breast cancer. Specifically binds the 5'-CACCC-3' sequence in the promoter of ID1, a key metastasis regulator in breast cancer, and repress its expression. May be a germ cell-specific transcription factor that plays important roles in spermatid differentiation and oocyte development. In Sus scrofa (Pig), this protein is Krueppel-like factor 17 (KLF17).